The following is a 695-amino-acid chain: Follicle-stimulating hormone receptor (695 aa).

The N-terminal stretch at 1 to 17 (MALFLVALLAFLSLGSG) is a signal peptide. 2 cysteine pairs are disulfide-bonded: C18–C25 and C23–C32. The LRRNT domain occupies 18–46 (CHHRLCHCSNGVFLCQDSKVTEMPSDLPR). Residues 18-366 (CHHRLCHCSN…EDIMGYDILR (349 aa)) lie on the Extracellular side of the membrane. 9 LRR repeats span residues 48-70 (AVEL…SGFG), 71-93 (DLEK…VFSN), 96-118 (KLHE…AFQN), 121-142 (NLRY…HKIQ), 143-167 (SLQK…SFMG), 171-192 (ESMI…AFNG), 194-216 (QLDE…VFQG), 219-239 (GPVI…YGLE), and 240-262 (NLKK…EKFV). 2 N-linked (GlcNAc...) asparagine glycosylation sites follow: N191 and N199. 4 cysteine pairs are disulfide-bonded: C275–C346, C276–C292, C276–C356, and C292–C338. N-linked (GlcNAc...) asparagine glycosylation is present at N293. The residue at position 335 (Y335) is a Sulfotyrosine. Residues 367 to 387 (VLIWFISILAITGNILVLVIL) form a helical membrane-spanning segment. Residues 388 to 398 (ITSQYKLTVPR) are Cytoplasmic-facing. Residues 399–421 (FLMCNLAFADLCIGIYLLLIASV) form a helical membrane-spanning segment. Residues 422-443 (DVHTKSQYHNYAIDWQTGAGCD) are Extracellular-facing. A disulfide bond links C442 and C517. Residues 444 to 465 (AAGFFTVFASELSVYTLTAITL) traverse the membrane as a helical segment. The Cytoplasmic segment spans residues 466–485 (ERWHTITHAMQLECKVHVRH). Residues 486-508 (AASIMLVGWVFAFAVALFPIFGI) form a helical membrane-spanning segment. Topologically, residues 509–528 (SSYMKVSICLPMDIDSPLSQ) are extracellular. A helical membrane pass occupies residues 529 to 550 (LYVMSLLVLNVLAFVVICGCYT). The Cytoplasmic segment spans residues 551-573 (HIYLTVRNPNITSSSSDTKIAKR). A helical transmembrane segment spans residues 574-597 (MAMLIFTDFLCMAPISFFAISASL). At 598–608 (KVPLITVSKSK) the chain is on the extracellular side. A helical transmembrane segment spans residues 609-630 (ILLVLFYPINSCANPFLYAIFT). Residues 631 to 695 (RNFRRDFFIL…LIPLRHLAKN (65 aa)) lie on the Cytoplasmic side of the membrane.

This sequence belongs to the G-protein coupled receptor 1 family. FSH/LSH/TSH subfamily. Homotrimer. Functions as a homotrimer binding the FSH hormone heterodimer composed of CGA and FSHB. Interacts with ARRB2. Interacts with APPL2; interaction is independent of follicle stimulating hormone stimulation. In terms of processing, N-glycosylated; indirectly required for FSH-binding, possibly via a conformational change that allows high affinity binding of hormone. Post-translationally, sulfated. In terms of tissue distribution, isoform FSH-R3 is expressed in ovary and testis, but not in kidney (at protein level).

The protein resides in the cell membrane. In terms of biological role, g protein-coupled receptor for follitropin, the follicle-stimulating hormone. The activity of isoform FSH-R1 is mediated by G proteins which activate adenylate cyclase. Isoform FSH-R2 and isoform FSH-R3 also bind FSH, but this does not result in activation of adenylate cyclase. Isoform FSH-R3 may be involved in calcium signaling. Through cAMP production activates the downstream PI3K-AKT and ERK1/ERK2 signaling pathways. This is Follicle-stimulating hormone receptor (FSHR) from Ovis aries (Sheep).